Consider the following 186-residue polypeptide: Large ribosomal subunit protein bL9 (186 aa).

Residues 153–186 (ELRQVKSQSQKSQQQEAKQNEVGEATDSDKADQK) form a disordered region. Residues 157 to 169 (VKSQSQKSQQQEA) are compositionally biased toward low complexity.

Belongs to the bacterial ribosomal protein bL9 family.

Binds to the 23S rRNA. This chain is Large ribosomal subunit protein bL9, found in Wolbachia sp. subsp. Brugia malayi (strain TRS).